An 800-amino-acid polypeptide reads, in one-letter code: MRLHFCSLLLLYCIVFVSSFLTTDALACLPDQIQALIQFKNEFESDGCNRSDYLNGVQCDNTTGAVTKLQLPSGCFTGTLKPNSSLFELHQLRYLNLSHNNFTSSSLPSEFSNLTRLEVLSLASSSFTGQVPSSISNLILLTHLNLSHNELTGSFPPVRNLTKLSFLDLSYNQFSGAIPFDLLPTLPFLSYLDLKKNHLTGSIDVPNSSSSSKLVRLSLGFNQFEGKIIEPISKLINLNHLELASLNISHPIDLRVFAPLKSLLVFDIRQNRLLPASLSSDSEFPLSLISLILIQCDIIEFPNIFKTLQNLEHIDISNNLIKGKVPEWFWKLPRLSIANLVNNSLTGFEGSSEVLLNSSVQLLDFAYNSMTGAFPTPPLGSIYLSAWNNSFTGNIPLSICNRSSLIVLDLSYNKFTGPIPQCLSNLKVVNLRKNSLEGSIPDEFHSGAKTQTLDVGYNRLTGKLPKSLLNCSSLRFLSVDNNRIEDTFPFWLKALPNLHVLTLRSNRFFGHLSPPDRGPLAFPELRILELSDNSFTGSLPPNFFVNWKASSPKINEDGRIYMGDYKNAYYIYEDTMDLQYKGLFMEQGKVLTFYSTIDFSGNKLEGQIPESIGLLKELIALNLSNNAFTGHIPMSLANVTELESLDLSRNQLSGNIPRELGSLSFLAYISVAHNQLKGEIPQGPQFSGQAESSFEGNVGLCGLPLQGSCVAPPTKYPKEEDEEEEEDEVIEWKAVFFGYWPGLLLGLVMAHVIASFKPKWFVKILGPAKGKQVDPVRLFMNLDSRWDSFNNKDTVEEEVI.

The N-terminal stretch at Met-1–Ser-19 is a signal peptide. Residues Phe-20–Lys-733 lie on the Extracellular side of the membrane. Residues Asn-49, Asn-61, Asn-83, Asn-96, Asn-101, and Asn-113 are each glycosylated (N-linked (GlcNAc...) asparagine). 12 LRR repeats span residues Leu-89 to Asn-113, Thr-115 to Leu-138, Ile-139 to Leu-161, Thr-162 to Thr-185, Pro-187 to Ser-212, Leu-214 to Leu-235, Ile-236 to Pro-259, Leu-260 to Asp-281, Pro-285 to Thr-307, Leu-308 to Leu-332, Arg-334 to Asn-357, and Ser-358 to Ser-381. 2 N-linked (GlcNAc...) asparagine glycosylation sites follow: Asn-145 and Asn-160. Asn-207 carries an N-linked (GlcNAc...) asparagine glycan. A glycan (N-linked (GlcNAc...) asparagine) is linked at Asn-247. N-linked (GlcNAc...) asparagine glycosylation is found at Asn-342 and Asn-357. Residues Ile-382–Asn-401 form an LRR 13; degenerate repeat. N-linked (GlcNAc...) asparagine glycans are attached at residues Asn-388 and Asn-401. LRR repeat units follow at residues Arg-402 to Leu-423, Ser-424 to Ser-446, Ala-448 to Cys-471, Ser-472 to Ala-494, Leu-495 to Pro-519, Phe-522 to Asn-546, Leu-591 to Leu-615, Lys-616 to Val-639, Thr-640 to Leu-663, and Phe-665 to Gly-688. Asn-470 is a glycosylation site (N-linked (GlcNAc...) asparagine). Asn-622 and Asn-638 each carry an N-linked (GlcNAc...) asparagine glycan. Residues Ala-734 to Ala-754 traverse the membrane as a helical segment. Over Ser-755–Ile-800 the chain is Cytoplasmic.

This sequence belongs to the RLP family.

The protein localises to the cell membrane. This Arabidopsis thaliana (Mouse-ear cress) protein is Receptor like protein 26.